A 91-amino-acid polypeptide reads, in one-letter code: Acylphosphatase (91 aa).

The Acylphosphatase-like domain maps to 3-90 (RVSMIVSGQV…CGYSIFTIRR (88 aa)). Active-site residues include Arg-18 and Asn-36.

Belongs to the acylphosphatase family.

It carries out the reaction an acyl phosphate + H2O = a carboxylate + phosphate + H(+). The sequence is that of Acylphosphatase (acyP) from Methanospirillum hungatei JF-1 (strain ATCC 27890 / DSM 864 / NBRC 100397 / JF-1).